Here is a 906-residue protein sequence, read N- to C-terminus: Protein translocase subunit SecA (906 aa).

ATP is bound by residues Gln-86, 104 to 108, and Asp-499; that span reads GEGKT. Residues 862 to 885 form a disordered region; sequence KPVVSRIDPKDRNPDDPTSWGRVS. Residues Cys-890, Cys-892, Cys-901, and His-902 each coordinate Zn(2+).

It belongs to the SecA family. In terms of assembly, monomer and homodimer. Part of the essential Sec protein translocation apparatus which comprises SecA, SecYEG and auxiliary proteins SecDF-YajC and YidC. Zn(2+) is required as a cofactor.

It is found in the cell inner membrane. Its subcellular location is the cytoplasm. It catalyses the reaction ATP + H2O + cellular proteinSide 1 = ADP + phosphate + cellular proteinSide 2.. In terms of biological role, part of the Sec protein translocase complex. Interacts with the SecYEG preprotein conducting channel. Has a central role in coupling the hydrolysis of ATP to the transfer of proteins into and across the cell membrane, serving both as a receptor for the preprotein-SecB complex and as an ATP-driven molecular motor driving the stepwise translocation of polypeptide chains across the membrane. This is Protein translocase subunit SecA from Rickettsia massiliae (strain Mtu5).